The following is a 244-amino-acid chain: Probable transcriptional regulatory protein DMR_30850 (244 aa).

It belongs to the TACO1 family.

It is found in the cytoplasm. The polypeptide is Probable transcriptional regulatory protein DMR_30850 (Solidesulfovibrio magneticus (strain ATCC 700980 / DSM 13731 / RS-1) (Desulfovibrio magneticus)).